The primary structure comprises 187 residues: Flavin prenyltransferase UbiX (187 aa).

FMN is bound by residues 9-11 (GSS), Thr34, 88-91 (SISS), and Arg123. Residues Tyr153 and Lys169 each contribute to the dimethylallyl phosphate site.

Belongs to the UbiX/PAD1 family.

It catalyses the reaction dimethylallyl phosphate + FMNH2 = prenylated FMNH2 + phosphate. Flavin prenyltransferase that catalyzes the synthesis of the prenylated FMN cofactor (prenyl-FMN) for 4-hydroxy-3-polyprenylbenzoic acid decarboxylase UbiD. The prenyltransferase is metal-independent and links a dimethylallyl moiety from dimethylallyl monophosphate (DMAP) to the flavin N5 and C6 atoms of FMN. This chain is Flavin prenyltransferase UbiX, found in Campylobacter jejuni subsp. jejuni serotype O:2 (strain ATCC 700819 / NCTC 11168).